The chain runs to 470 residues: MKFKSLPMFALLMLGGCSLIPDYQQPAAPMQAQWPTGQAYGGQGDQRSIATALPKAKEFFKDPALVRLLDAALENNRDLRIAAKNVESYRALYRIQRAERFPTLDGQASGNRTRLPDDLSPTGDSRIDSQYQVGLVTAYELDLFGRIRSLSNQALEKYLATEEAQRSVQIALIGDVATTYFLWRTDQALLELTEATLTSYVESLAMIESSAWAGTSSELDVRQARTLVNQAQAQQALYTRRIAQDVNALELLLGSKIPTDLPKNSPLAMSALGKVPAGLPADLLLNRPDIRSAEHQLMAANANIGAARAAFFPRISLTASAGSASSDLDGLFNSGSDSWSFAPQISVPIFNAGKLRANLDYAELQKDVGVATYEKSIQTAFREVADGLAARGTYGKQLSAQSELVDNYKAYFSLAQQRYDQGVDSYLTVLDAQRELFSSQQKLLNDQLDQINSEVQLYKALGGGWSVSQN.

The N-terminal stretch at 1–16 (MKFKSLPMFALLMLGG) is a signal peptide. Cysteine 17 is lipidated: N-palmitoyl cysteine. A lipid anchor (S-diacylglycerol cysteine) is attached at cysteine 17. The segment at 104–123 (LDGQASGNRTRLPDDLSPTG) is disordered.

Belongs to the outer membrane factor (OMF) (TC 1.B.17) family.

It localises to the cell outer membrane. The outer membrane component of an organic solvent efflux pump. Involved in export of a number of low log POW compounds including hexane (log POW 3.5), toluene (log POW 2.5) and dimethylphthalate (log POW 2.3). The solvent resistance phenotype has been postulated to depend on the operon expression level. The polypeptide is Solvent efflux pump outer membrane protein SrpC (srpC) (Pseudomonas putida (Arthrobacter siderocapsulatus)).